We begin with the raw amino-acid sequence, 348 residues long: Ion-translocating oxidoreductase complex subunit D (348 aa).

Transmembrane regions (helical) follow at residues 15-35 (LTAK…GMQA), 36-56 (YFFG…AVAI), 67-87 (LTAF…LAIS), 88-108 (IPPY…LLLA), and 125-145 (VAYA…LVPI). The residue at position 186 (Thr186) is an FMN phosphoryl threonine. Transmembrane regions (helical) follow at residues 212–232 (LFAN…LLLI), 241–261 (IPAA…LLLP), 265–285 (LNVV…FIAT), 298–318 (LIFG…GNYP), and 320–340 (AVAF…HYTQ).

Belongs to the NqrB/RnfD family. In terms of assembly, the complex is composed of six subunits: RnfA, RnfB, RnfC, RnfD, RnfE and RnfG. FMN is required as a cofactor.

It localises to the cell inner membrane. In terms of biological role, part of a membrane-bound complex that couples electron transfer with translocation of ions across the membrane. This is Ion-translocating oxidoreductase complex subunit D from Actinobacillus pleuropneumoniae serotype 3 (strain JL03).